A 120-amino-acid chain; its full sequence is uncharacterized protein (120 aa).

It to phage T4 y06Q.

This is an uncharacterized protein from Escherichia coli (strain K12).